Consider the following 246-residue polypeptide: D-erythrulose reductase (246 aa).

13–41 provides a ligand contact to NADP(+); it reads LVTGAGKGIGRAVAVALCKAGARVTALSR. Residue Ser-138 participates in substrate binding. Tyr-151 serves as the catalytic Proton acceptor. Lys-155 contacts NADP(+).

Belongs to the short-chain dehydrogenases/reductases (SDR) family. Homotetramer. Post-translationally, the N-terminus is blocked. As to expression, highly expressed in kidney, and also found in high amounts in liver and testis. Low expression seen in all other tissues tested.

The protein resides in the cytoplasm. The catalysed reaction is D-threitol + NADP(+) = D-erythrulose + NADPH + H(+). It carries out the reaction xylitol + NADP(+) = L-xylulose + NADPH + H(+). In terms of biological role, catalyzes the reduction of D-erythrulose to D-threitol with the concomitant oxidation of NAD(P)H to NAD(P)(+). NADH is less effective than NADPH. May also catalyze the reduction of L-xylulose. This is D-erythrulose reductase (DER) from Gallus gallus (Chicken).